A 338-amino-acid polypeptide reads, in one-letter code: Anthranilate phosphoribosyltransferase (338 aa).

5-phospho-alpha-D-ribose 1-diphosphate-binding positions include glycine 81, 84–85 (GD), serine 89, 91–94 (NVST), 109–117 (KHGNRALSS), and alanine 121. Residue glycine 81 coordinates anthranilate. Serine 93 contributes to the Mg(2+) binding site. Residue asparagine 112 coordinates anthranilate. Position 167 (arginine 167) interacts with anthranilate. The Mg(2+) site is built by aspartate 226 and glutamate 227.

The protein belongs to the anthranilate phosphoribosyltransferase family. As to quaternary structure, homodimer. Mg(2+) serves as cofactor.

It catalyses the reaction N-(5-phospho-beta-D-ribosyl)anthranilate + diphosphate = 5-phospho-alpha-D-ribose 1-diphosphate + anthranilate. The protein operates within amino-acid biosynthesis; L-tryptophan biosynthesis; L-tryptophan from chorismate: step 2/5. In terms of biological role, catalyzes the transfer of the phosphoribosyl group of 5-phosphorylribose-1-pyrophosphate (PRPP) to anthranilate to yield N-(5'-phosphoribosyl)-anthranilate (PRA). This is Anthranilate phosphoribosyltransferase from Rhodopseudomonas palustris (strain TIE-1).